Reading from the N-terminus, the 472-residue chain is Glycerol-3-phosphate acyltransferase, chloroplastic (472 aa).

Residues 1–102 (MLVLSSSAPP…EIPVKKEDDN (102 aa)) constitute a chloroplast transit peptide. An HXXXXD motif motif is present at residues 241-246 (HQSEAD).

The protein belongs to the GPAT/DAPAT family.

Its subcellular location is the plastid. It localises to the chloroplast stroma. It catalyses the reaction sn-glycerol 3-phosphate + an acyl-CoA = a 1-acyl-sn-glycero-3-phosphate + CoA. It functions in the pathway phospholipid metabolism; CDP-diacylglycerol biosynthesis; CDP-diacylglycerol from sn-glycerol 3-phosphate: step 1/3. Esterifies acyl-group from acyl-ACP to the sn-1 position of glycerol-3-phosphate. The enzyme from chilling-resistant plants discriminates against non-fluid palmitic acid and selects oleic acid whereas the enzyme from sensitive plants accepts both fatty acids. This is an oleate-selective acyltransferase. This chain is Glycerol-3-phosphate acyltransferase, chloroplastic (GAT), found in Spinacia oleracea (Spinach).